The following is a 252-amino-acid chain: Hsp70-Hsp90 organising protein (252 aa).

3 TPR repeats span residues 7-40 (AQRL…DPLD), 41-74 (HVLY…KKDW), and 75-108 (PKGY…DPNN). The stretch at 197 to 239 (EGNDAEERQRQQREEEERRKKKEEEERKKKEEEEMKKQNRTPE) forms a coiled coil. Residues 199–252 (NDAEERQRQQREEEERRKKKEEEERKKKEEEEMKKQNRTPEQIQGDEHKLKVMN) form a disordered region. Composition is skewed to basic and acidic residues over residues 201-233 (AEER…EMKK) and 243-252 (GDEHKLKVMN).

As to quaternary structure, monomer. Homodimer. Forms a complex composed of HOP and chaperones HSP70 and HSP90; the interaction is stronger in the absence of ATP. Interacts (via TPR 1, 2, 3, 7, 8 and 9 repeats) with HSP70 (via C-terminus); the interaction is direct and is stronger in the absence of ATP. Interacts (via TPR 4, 5 and 6 repeats) with HSP90 (via C-terminus); the interaction is direct.

The protein localises to the cytoplasm. In terms of biological role, acts as a co-chaperone and mediates the association of the chaperones HSP70 and HSP90 probably facilitating substrate transfer from HSP70 to HSP90. Stimulates HSP70 ATPase activity and, in contrast, inhibits HSP90 ATPase activity. The protein is Hsp70-Hsp90 organising protein of Plasmodium falciparum.